The chain runs to 94 residues: Acylphosphatase (94 aa).

An Acylphosphatase-like domain is found at 8–94; that stretch reads RLTAWVHGRV…REQITGFHER (87 aa). Catalysis depends on residues Arg-23 and Asn-41.

The protein belongs to the acylphosphatase family.

It catalyses the reaction an acyl phosphate + H2O = a carboxylate + phosphate + H(+). This chain is Acylphosphatase (acyP), found in Mycobacterium sp. (strain KMS).